The following is a 105-amino-acid chain: QADVGLALGTLYGNVFSQTTICRFEALQLSFKNMCKLKPLLNKWLEEADSSTGSPTSIDKIAAQGRKRKKRTSIEVSVKGALESHFLKCPKPAAQEITTLADSLQ.

Residues 1–49 (QADVGLALGTLYGNVFSQTTICRFEALQLSFKNMCKLKPLLNKWLEEAD) enclose the POU-specific domain. A DNA-binding region (homeobox) is located at residues 67–105 (KRKKRTSIEVSVKGALESHFLKCPKPAAQEITTLADSLQ).

It belongs to the POU transcription factor family. Class-3 subfamily.

The protein resides in the nucleus. This chain is POU domain, class 3, transcription factor 3 (pou3f3), found in Xenopus laevis (African clawed frog).